The chain runs to 203 residues: Holliday junction branch migration complex subunit RuvA (203 aa).

The segment at 1-63 (MIGKLSGKID…EEHIHLYGFL (63 aa)) is domain I. The tract at residues 64 to 142 (TIEEKNFFNL…KISTGAAIIN (79 aa)) is domain II. Residues 143 to 149 (DSLNIKN) are flexible linker. Positions 150–203 (ITSVASNEVIKALVNLGFSRFEAQNSVQGIVIQNPEISIDELIKTALKNRNAGL) are domain III.

It belongs to the RuvA family. As to quaternary structure, homotetramer. Forms an RuvA(8)-RuvB(12)-Holliday junction (HJ) complex. HJ DNA is sandwiched between 2 RuvA tetramers; dsDNA enters through RuvA and exits via RuvB. An RuvB hexamer assembles on each DNA strand where it exits the tetramer. Each RuvB hexamer is contacted by two RuvA subunits (via domain III) on 2 adjacent RuvB subunits; this complex drives branch migration. In the full resolvosome a probable DNA-RuvA(4)-RuvB(12)-RuvC(2) complex forms which resolves the HJ.

The protein localises to the cytoplasm. Its function is as follows. The RuvA-RuvB-RuvC complex processes Holliday junction (HJ) DNA during genetic recombination and DNA repair, while the RuvA-RuvB complex plays an important role in the rescue of blocked DNA replication forks via replication fork reversal (RFR). RuvA specifically binds to HJ cruciform DNA, conferring on it an open structure. The RuvB hexamer acts as an ATP-dependent pump, pulling dsDNA into and through the RuvAB complex. HJ branch migration allows RuvC to scan DNA until it finds its consensus sequence, where it cleaves and resolves the cruciform DNA. The sequence is that of Holliday junction branch migration complex subunit RuvA from Rickettsia akari (strain Hartford).